The chain runs to 980 residues: Exportin-T (980 aa).

It belongs to the exportin family. Expressed in roots, stems, leaves, flowers and embryos.

The protein localises to the nucleus. It localises to the cytoplasm. Functionally, probable tRNA nucleus export receptor which regulates tRNA processing and facilitates tRNA translocation across the nuclear pore complex. Is required for correct leaf initiation at different developmental stages and may play a role in floral patterning. This Oryza sativa subsp. japonica (Rice) protein is Exportin-T.